The primary structure comprises 128 residues: Fluoride-specific ion channel FluC (128 aa).

The next 4 membrane-spanning stretches (helical) occupy residues V4–I24, F37–F57, T65–S85, and F101–I121. 2 residues coordinate Na(+): G76 and T79.

The protein belongs to the fluoride channel Fluc/FEX (TC 1.A.43) family.

It is found in the cell inner membrane. It carries out the reaction fluoride(in) = fluoride(out). With respect to regulation, na(+) is not transported, but it plays an essential structural role and its presence is essential for fluoride channel function. Fluoride-specific ion channel. Important for reducing fluoride concentration in the cell, thus reducing its toxicity. This chain is Fluoride-specific ion channel FluC, found in Desulfotalea psychrophila (strain LSv54 / DSM 12343).